A 303-amino-acid polypeptide reads, in one-letter code: HTH-type transcriptional regulator CatM (303 aa).

The 58-residue stretch at 1-58 (MELRHLRYFVTVVEEQSISKAAEKLCIAQPPLSRQIQKLEEELGIQLFERGFRPAKVT) folds into the HTH lysR-type domain. Residues 18–37 (ISKAAEKLCIAQPPLSRQIQ) constitute a DNA-binding region (H-T-H motif). Cis,cis-muconate is bound by residues Ser-99 and Thr-128.

The protein belongs to the LysR transcriptional regulatory family. Homotetramer in solution.

Positively regulates the expression of catA, catBCIJFD and benPK in response to cis,cis-muconate. It binds to the catB-catM intercistronic region, to a specific sequence upstream of catA and to the benPK promoter region. Can also repress pca genes. The polypeptide is HTH-type transcriptional regulator CatM (catM) (Acinetobacter baylyi (strain ATCC 33305 / BD413 / ADP1)).